The sequence spans 252 residues: Low-density lipoprotein receptor-related protein 5-like protein (252 aa).

5 LDL-receptor class B repeats span residues 3 to 45 (GHVY…NWVA), 46 to 88 (RSLY…HPEM), 89 to 132 (GLTY…DLQE), 133 to 175 (GKLY…LGDF), and 176 to 218 (IYWT…DKVV). Residues 223–247 (HADRNGGAATCASSRPTQPGLAAPS) are disordered.

The protein is Low-density lipoprotein receptor-related protein 5-like protein (LRP5L) of Homo sapiens (Human).